Here is a 190-residue protein sequence, read N- to C-terminus: MPQHTELVVLLDDDGETIGTAPKATVHTRDTALHLAFSCHVFDAEGRILVTRRAIGKLTWPGVWTNSFCGHPAPDEDMLEAVHRRAEQELGLTLESVELVLPDFRYRATDAAGVVENEICPVFRAVAATPVDPRPEEVGEYQWVDPEQLIPAVAHTPWAFSPWLTLQLPLLYPEHAAHAGLADAAAVPAA.

Mn(2+) contacts are provided by His27 and His34. Positions 32-166 (ALHLAFSCHV…PWAFSPWLTL (135 aa)) constitute a Nudix hydrolase domain. Residue Cys69 is part of the active site. A Mn(2+)-binding site is contributed by His71. Mg(2+) is bound at residue Glu89. The Mn(2+) site is built by Glu116 and Glu118. Glu118 is an active-site residue.

Belongs to the IPP isomerase type 1 family. Mg(2+) is required as a cofactor. The cofactor is Mn(2+).

The protein resides in the cytoplasm. It catalyses the reaction isopentenyl diphosphate = dimethylallyl diphosphate. It participates in isoprenoid biosynthesis; dimethylallyl diphosphate biosynthesis; dimethylallyl diphosphate from isopentenyl diphosphate: step 1/1. Its function is as follows. Catalyzes the 1,3-allylic rearrangement of the homoallylic substrate isopentenyl (IPP) to its highly electrophilic allylic isomer, dimethylallyl diphosphate (DMAPP). The sequence is that of Isopentenyl-diphosphate Delta-isomerase from Clavibacter sepedonicus (Clavibacter michiganensis subsp. sepedonicus).